Reading from the N-terminus, the 354-residue chain is UDP-3-O-acylglucosamine N-acyltransferase (354 aa).

The active-site Proton acceptor is the His245.

Belongs to the transferase hexapeptide repeat family. LpxD subfamily. As to quaternary structure, homotrimer.

The catalysed reaction is a UDP-3-O-[(3R)-3-hydroxyacyl]-alpha-D-glucosamine + a (3R)-hydroxyacyl-[ACP] = a UDP-2-N,3-O-bis[(3R)-3-hydroxyacyl]-alpha-D-glucosamine + holo-[ACP] + H(+). It participates in bacterial outer membrane biogenesis; LPS lipid A biosynthesis. Functionally, catalyzes the N-acylation of UDP-3-O-acylglucosamine using 3-hydroxyacyl-ACP as the acyl donor. Is involved in the biosynthesis of lipid A, a phosphorylated glycolipid that anchors the lipopolysaccharide to the outer membrane of the cell. This is UDP-3-O-acylglucosamine N-acyltransferase from Anaeromyxobacter sp. (strain K).